The primary structure comprises 238 residues: Ribitol-5-phosphate cytidylyltransferase 2 (238 aa).

Residues 7–10 (LAGG) and 81–87 (GTDRNET) each bind CTP.

It belongs to the IspD/TarI cytidylyltransferase family. TarI subfamily.

The enzyme catalyses D-ribitol 5-phosphate + CTP + H(+) = CDP-L-ribitol + diphosphate. Its pathway is cell wall biogenesis; poly(ribitol phosphate) teichoic acid biosynthesis. Its function is as follows. Catalyzes the transfer of the cytidylyl group of CTP to D-ribitol 5-phosphate. The protein is Ribitol-5-phosphate cytidylyltransferase 2 of Staphylococcus aureus (strain bovine RF122 / ET3-1).